Here is an 847-residue protein sequence, read N- to C-terminus: MSETETMNVNGPQDFYSDSPFCLEASFSSSDLLQNETKNVKRGNESVHMSSEDILSTEGSLLGDINLGNYPERIQNQPANTRVSSSRQFEPICKFHWIDAFNDDSSVPDLTRAFSYSEEKPELQSQVYNDPADASQKPDPLKEESLMESSTSENKDELVHEPVRKSRSLCLNHYRGKTRPLTETPLVRSVVVDVALNNNQPESFLGKENVCRNGENLSDSENCFDQLDLRAIYKAGKPEVSSKGIQNSGEFSDMSVGPQEEVTEDGLDSLAITSPWSPAGIFKGRRSQDDFQMPDGELDFESLEPLEEDMALNEALQKLKQTNKKQELQIQDLHGRNLTLESRVQELQTKVSKQHVLLDIINKLKVNVEELIDDKYNVILEKNDINKKLQDLQETSANTKKHLQESKKDQESLQLQVKKIKVHYVRLQERYIAEIQQKNRSVTQCLEIEKTLSKKDEELQRLQRHKGELEKATSSALDLLKREKEIREQEFLSFQEEFQRREKENLKERRKLKSRVEKLVAQVKSLLFTCESERAQTTALQQQVDALRLENLELRQQAAKREAQACTPSFEIIQPKEKLEEVVEPDVTQDTKGTHCNLFLNCSSCKENPELPSMKRTSPLTSRLHSLLALTIGLLTCQDLAIPDTELRQESKKANDIMLQRLKDCQLRKKDLDKELLKHRNRIATLKELIANEKALQDHTMEITDFDTEEVKNASEAPVLLTVKLDKYHSLNEELDFLITKLGDLLESKEDHYSRLIEENDKYRRHVGSLINKVTSYEEIIKCADQRLEISHSQIAHLEERNRHLEDLIRMPREKARGLRPRLDNHPKSMTLISHLEGHHKECSISM.

The disordered stretch occupies residues 118-161; that stretch reads EEKPELQSQVYNDPADASQKPDPLKEESLMESSTSENKDELVHE. Residues 377–567 are a coiled coil; sequence NVILEKNDIN…AAKREAQACT (191 aa).

The polypeptide is Cancer-associated gene 1 protein homolog (Cage1) (Rattus norvegicus (Rat)).